The chain runs to 473 residues: Nitrogenase vanadium-iron protein alpha chain (473 aa).

[8Fe-7S] cluster contacts are provided by cysteine 49, cysteine 74, and cysteine 137. Positions 256 and 422 each coordinate [7Fe-V-9S-C-homocitryl] cluster.

This sequence belongs to the NifD/NifK/NifE/NifN family. As to quaternary structure, hexamer of two alpha, two beta, and two delta chains. Requires [8Fe-7S] cluster as cofactor. [7Fe-V-9S-C-homocitryl] cluster is required as a cofactor.

The catalysed reaction is N2 + 8 reduced [2Fe-2S]-[ferredoxin] + 16 ATP + 16 H2O = H2 + 8 oxidized [2Fe-2S]-[ferredoxin] + 2 NH4(+) + 16 ADP + 16 phosphate + 6 H(+). Its function is as follows. This vanadium-iron protein is part of the nitrogenase complex that catalyzes the key enzymatic reactions in nitrogen fixation. In Azotobacter chroococcum mcd 1, this protein is Nitrogenase vanadium-iron protein alpha chain (vnfD).